A 367-amino-acid polypeptide reads, in one-letter code: Phosphoribosylaminoimidazole-succinocarboxamide synthase (367 aa).

This sequence belongs to the SAICAR synthetase family.

It carries out the reaction 5-amino-1-(5-phospho-D-ribosyl)imidazole-4-carboxylate + L-aspartate + ATP = (2S)-2-[5-amino-1-(5-phospho-beta-D-ribosyl)imidazole-4-carboxamido]succinate + ADP + phosphate + 2 H(+). The protein operates within purine metabolism; IMP biosynthesis via de novo pathway; 5-amino-1-(5-phospho-D-ribosyl)imidazole-4-carboxamide from 5-amino-1-(5-phospho-D-ribosyl)imidazole-4-carboxylate: step 1/2. This Saccharophagus degradans (strain 2-40 / ATCC 43961 / DSM 17024) protein is Phosphoribosylaminoimidazole-succinocarboxamide synthase.